The sequence spans 468 residues: MKAASNSVSSAGGSVSPTTTQPPLPPGQSSHPQIYDQQMQYYFAAAMPNQPMATYAAQNGSSQQYAPAAPYYQDANGQYVQVPANGSMAPQQHMMVSGQPYLYMAQPQQGAQQVMQSGQPQLIYYQQSMAPQAAPMYFHPMQAAPMLPEQMGVMPHTQPAIPPQQQPRQVGVEISSTRTAPLTSSTPLPTSLEYETVQRDNRNRNIQFRYHRVMEHDELPIDEISKITLDNHNDDTMSAEKENHFHEHRGEKFGRRGFPIPETDSQQPPNYKTRLCMMHASGIKPCDMGARCKFAHGLKELRATDAPARYPNNKYKTKLCKNFARGGTGFCPYGLRCEFVHPTDKEFQNIPPYQRMSHDDQDYDQDVIPEDYVVARHQPRFMRTGGRATTPTKVMLKHRNVAGSMMCLSNAGRDLQAGGDYNQPESNEDDLPPHLRRNRRENPPMNKRRTSLSTKWTSEENLGLRGHY.

A compositionally biased stretch (low complexity) spans 1–19 (MKAASNSVSSAGGSVSPTT). The segment at 1-32 (MKAASNSVSSAGGSVSPTTTQPPLPPGQSSHP) is disordered. Residue Thr-186 is modified to Phosphothreonine; by mbk-2. Basic and acidic residues predominate over residues 243 to 254 (NHFHEHRGEKFG). Residues 243 to 269 (NHFHEHRGEKFGRRGFPIPETDSQQPP) form a disordered region. 2 consecutive C3H1-type zinc fingers follow at residues 270–299 (NYKT…HGLK) and 314–344 (KYKT…HPTD). The segment at 414–468 (DLQAGGDYNQPESNEDDLPPHLRRNRRENPPMNKRRTSLSTKWTSEENLGLRGHY) is disordered. Polar residues predominate over residues 451–460 (SLSTKWTSEE). Ser-458 carries the phosphoserine modification.

In terms of assembly, interacts (when phosphorylated on Thr-186) with plk-1 (via POLO box domain) and plk-2 (via POLO box domain). Phosphorylation on Ser-458 by par-1 promotes localization of the protein to the anterior cytoplasm of the zygote. Phosphorylation by mbk-1 appears to be required for subsequent phosphorylation by plk-1. Asymmetrically localized to the anterior of the zygote before mitotic division, then differentially distributed to the somatic blastomere precursor cells.

The protein localises to the cytoplasm. Its function is as follows. Functions with mex-6 to affect embryonic viability, establish soma germline asymmetry in embryos and establish plk-1, pie-1, mex-1, and pos-1 asymmetry in embryos. Also affects formation of intestinal cells. Binds to mRNA in vitro, and inhibits pgl-3-mediated P-granule formation, probably by competing with pgl-3 for binding to mRNA. Required for neg-1 expression in anterior blastomeres during embryogenesis. This is Zinc finger protein mex-5 from Caenorhabditis elegans.